The following is a 48-amino-acid chain: Cytochrome c oxidase subunit 2 (48 aa).

Residues 1–14 lie on the Mitochondrial intermembrane side of the membrane; the sequence is MAHPAQLGLQDASS. The helical transmembrane segment at 15–45 threads the bilayer; sequence PIXEELLHFHEDALMIVFLISTLVLYIITTT. At 46–48 the chain is on the mitochondrial matrix side; sequence VST.

The protein belongs to the cytochrome c oxidase subunit 2 family. Component of the cytochrome c oxidase (complex IV, CIV), a multisubunit enzyme composed of 14 subunits. The complex is composed of a catalytic core of 3 subunits MT-CO1, MT-CO2 and MT-CO3, encoded in the mitochondrial DNA, and 11 supernumerary subunits COX4I, COX5A, COX5B, COX6A, COX6B, COX6C, COX7A, COX7B, COX7C, COX8 and NDUFA4, which are encoded in the nuclear genome. The complex exists as a monomer or a dimer and forms supercomplexes (SCs) in the inner mitochondrial membrane with NADH-ubiquinone oxidoreductase (complex I, CI) and ubiquinol-cytochrome c oxidoreductase (cytochrome b-c1 complex, complex III, CIII), resulting in different assemblies (supercomplex SCI(1)III(2)IV(1) and megacomplex MCI(2)III(2)IV(2)). Found in a complex with TMEM177, COA6, COX18, COX20, SCO1 and SCO2. Interacts with TMEM177 in a COX20-dependent manner. Interacts with COX20. Interacts with COX16. It depends on Cu cation as a cofactor.

The protein localises to the mitochondrion inner membrane. It catalyses the reaction 4 Fe(II)-[cytochrome c] + O2 + 8 H(+)(in) = 4 Fe(III)-[cytochrome c] + 2 H2O + 4 H(+)(out). Functionally, component of the cytochrome c oxidase, the last enzyme in the mitochondrial electron transport chain which drives oxidative phosphorylation. The respiratory chain contains 3 multisubunit complexes succinate dehydrogenase (complex II, CII), ubiquinol-cytochrome c oxidoreductase (cytochrome b-c1 complex, complex III, CIII) and cytochrome c oxidase (complex IV, CIV), that cooperate to transfer electrons derived from NADH and succinate to molecular oxygen, creating an electrochemical gradient over the inner membrane that drives transmembrane transport and the ATP synthase. Cytochrome c oxidase is the component of the respiratory chain that catalyzes the reduction of oxygen to water. Electrons originating from reduced cytochrome c in the intermembrane space (IMS) are transferred via the dinuclear copper A center (CU(A)) of subunit 2 and heme A of subunit 1 to the active site in subunit 1, a binuclear center (BNC) formed by heme A3 and copper B (CU(B)). The BNC reduces molecular oxygen to 2 water molecules using 4 electrons from cytochrome c in the IMS and 4 protons from the mitochondrial matrix. The sequence is that of Cytochrome c oxidase subunit 2 (mt-co2) from Polypterus sp. (Bichir).